A 790-amino-acid chain; its full sequence is DNA topoisomerase 1 (790 aa).

Polar residues-rich tracts occupy residues 1-18, 44-54, and 61-70; these read MKSN…SNVM, KLSSGALNGNS, and SNLSCPSPYT. Residues 1–196 are disordered; it reads MKSNPGITVI…KKRPDVSASV (196 aa). The span at 158 to 167 shows a compositional bias: acidic residues; it reads QEEAAADDDP. Positions 168-181 are enriched in polar residues; it reads SISNRNKKSTTPAS. 3 interaction with DNA regions span residues 426–427, 490–495, and 581–583; these read KY, RAGNEK, and TAK. A Topo IB-type catalytic domain is found at 433-790; that stretch reads SSSLKGKVTR…AMDVVLIFRF (358 aa). Y749 functions as the O-(3'-phospho-DNA)-tyrosine intermediate in the catalytic mechanism.

This sequence belongs to the type IB topoisomerase family.

The protein localises to the nucleus. It catalyses the reaction ATP-independent breakage of single-stranded DNA, followed by passage and rejoining.. Releases the supercoiling and torsional tension of DNA introduced during the DNA replication and transcription by transiently cleaving and rejoining one strand of the DNA duplex. Introduces a single-strand break via transesterification at a target site in duplex DNA. The scissile phosphodiester is attacked by the catalytic tyrosine of the enzyme, resulting in the formation of a DNA-(3'-phosphotyrosyl)-enzyme intermediate and the expulsion of a 5'-OH DNA strand. The free DNA strand then rotates around the intact phosphodiester bond on the opposing strand, thus removing DNA supercoils. Finally, in the religation step, the DNA 5'-OH attacks the covalent intermediate to expel the active-site tyrosine and restore the DNA phosphodiester backbone. The sequence is that of DNA topoisomerase 1 (TOP1) from Daucus carota (Wild carrot).